The chain runs to 280 residues: 2,3,4,5-tetrahydropyridine-2,6-dicarboxylate N-succinyltransferase (280 aa).

Substrate-binding residues include Arg-107 and Asp-144.

This sequence belongs to the transferase hexapeptide repeat family. In terms of assembly, homotrimer.

The protein resides in the cytoplasm. It carries out the reaction (S)-2,3,4,5-tetrahydrodipicolinate + succinyl-CoA + H2O = (S)-2-succinylamino-6-oxoheptanedioate + CoA. The protein operates within amino-acid biosynthesis; L-lysine biosynthesis via DAP pathway; LL-2,6-diaminopimelate from (S)-tetrahydrodipicolinate (succinylase route): step 1/3. This chain is 2,3,4,5-tetrahydropyridine-2,6-dicarboxylate N-succinyltransferase, found in Granulibacter bethesdensis (strain ATCC BAA-1260 / CGDNIH1).